Reading from the N-terminus, the 118-residue chain is T cell receptor gamma variable 3 (118 aa).

Residues 1–17 (MRWALLVLLAFLSPASQ) form the signal peptide. The Ig-like domain maps to 18–118 (KSSNLEGRTK…GVYYCATWDR (101 aa)). Cys41 and Cys113 are disulfide-bonded. Asn106 carries an N-linked (GlcNAc...) asparagine glycan.

In terms of assembly, gamma-delta TR is a heterodimer composed of a gamma and delta chain; disulfide-linked. The gamma-delta TR is associated with the transmembrane signaling CD3 coreceptor proteins following the stoichiometry: a single gamma-delta TR heterodimer associates with one CD3D-CD3E heterodimer, one CD3G-CD3E heterodimer and one CD247 homodimer forming a stable octameric structure. Upon activation, gamma-delta TR complex associates with FCER1G to initiate intracellular signaling.

The protein localises to the cell membrane. Its function is as follows. V region of the variable domain of T cell receptor (TR) gamma chain that participates in the antigen recognition. Gamma-delta TRs recognize a variety of self and foreign non-peptide antigens frequently expressed at the epithelial boundaries between the host and external environment, including endogenous lipids presented by MH-like protein CD1D and phosphoantigens presented by butyrophilin-like molecule BTN3A1. Upon antigen recognition induces rapid, innate-like immune responses involved in pathogen clearance and tissue repair. Binding of gamma-delta TR complex to antigen triggers phosphorylation of immunoreceptor tyrosine-based activation motifs (ITAMs) in the CD3 chains by the LCK and FYN kinases, allowing the recruitment, phosphorylation, and activation of ZAP70 that facilitates phosphorylation of the scaffolding proteins LCP2 and LAT. This lead to the formation of a supramolecular signalosome that recruits the phospholipase PLCG1, resulting in calcium mobilization and ERK activation, ultimately leading to T cell expansion and differentiation into effector cells. Gamma-delta TRs are produced through somatic rearrangement of a limited repertoire of variable (V), diversity (D), and joining (J) genes. The potential diversity of gamma-delta TRs is conferred by the unique ability to rearrange (D) genes in tandem and to utilize all three reading frames. The combinatorial diversity is considerably increased by the sequence exonuclease trimming and random nucleotide (N) region additions which occur during the V-(D)-J rearrangements. The polypeptide is T cell receptor gamma variable 3 (Homo sapiens (Human)).